The sequence spans 137 residues: Probable 4-amino-4-deoxy-L-arabinose-phosphoundecaprenol flippase subunit ArnF (137 aa).

Over 1 to 3 (MNA) the chain is Cytoplasmic. Residues 4-24 (LRGWLAALGSVLLASAAQLGM) traverse the membrane as a helical segment. Residues 25–44 (RWGMSRLPLPEAWAGQTPER) are Periplasmic-facing. Residues 45-65 (AALLAVALAVAAYAASLLCWL) form a helical membrane-spanning segment. At 66-76 (AALRHLPLGRA) the chain is on the cytoplasmic side. The helical transmembrane segment at 77 to 97 (YSLLSASYALVYLLAASLPAF) threads the bilayer. At 98-100 (DET) the chain is on the periplasmic side. Residues 101 to 121 (FSTSKTLGVGLVVLGVLTVNA) form a helical membrane-spanning segment. Topologically, residues 122–137 (RRTAAAPAHHPSRKAP) are cytoplasmic.

It belongs to the ArnF family. As to quaternary structure, heterodimer of ArnE and ArnF.

It is found in the cell inner membrane. It functions in the pathway bacterial outer membrane biogenesis; lipopolysaccharide biosynthesis. Functionally, translocates 4-amino-4-deoxy-L-arabinose-phosphoundecaprenol (alpha-L-Ara4N-phosphoundecaprenol) from the cytoplasmic to the periplasmic side of the inner membrane. The protein is Probable 4-amino-4-deoxy-L-arabinose-phosphoundecaprenol flippase subunit ArnF of Pseudomonas aeruginosa (strain ATCC 15692 / DSM 22644 / CIP 104116 / JCM 14847 / LMG 12228 / 1C / PRS 101 / PAO1).